Consider the following 391-residue polypeptide: PPE family protein PPE15 (391 aa).

The interval 312–367 (LGEATLVGRLSVPAAWSTAAPATTAGATALEGSGWTVAAEEAGPVTGMMPGMASAA) is eukaryotic-like SH3 domain.

It belongs to the mycobacterial PPE family. As to quaternary structure, forms a heterodimer with PE8. The dimer forms a 1:1:1 heterotrimeric complex with EspG5. PPE15 interacts directly with EspG5. Interacts via the C-terminal region with host Toll-like receptor 4 (TLR4). Interacts, also via the C-terminal region, with two cytosolic subunits of the host NOX complex, p47phox (NCF1) and p67phox (NCF2).

The protein resides in the secreted. It localises to the host mitochondrion. In terms of biological role, may play a critical role in the homeostasis of triacylglycerol-containing lipid droplets in M.tuberculosis and influence the entry of the pathogen into a dormant state. Is recognized by host TLR4 receptor at the macrophage cell surface, which modulates the host immune response, induces mitochondrial stress and perturbations, and induces macrophage apoptosis leading to pathogen persistence. Also downregulates NOX-mediated reactive oxygen species (ROS) generation in THP1 macrophages, which increases intracellular survival of bacteria. PPE15 interacts with two subunits of the host NADPH oxidase (NOX) complex in the cytosol of macrophages and prevents their migration to the membrane, which inhibits the assembly of the NOX complex at the plasma membrane of THP1 macrophages. This leads to reduced NOX activity and diminished ROS generation. This is PPE family protein PPE15 (PPE15) from Mycobacterium tuberculosis (strain CDC 1551 / Oshkosh).